The sequence spans 151 residues: Large ribosomal subunit protein bL9 (151 aa).

This sequence belongs to the bacterial ribosomal protein bL9 family.

In terms of biological role, binds to the 23S rRNA. The sequence is that of Large ribosomal subunit protein bL9 from Bordetella bronchiseptica (strain ATCC BAA-588 / NCTC 13252 / RB50) (Alcaligenes bronchisepticus).